The primary structure comprises 131 residues: D-ribose pyranase (131 aa).

His20 (proton donor) is an active-site residue. Substrate contacts are provided by residues Asp28, His98, and 120–122 (YSN).

The protein belongs to the RbsD / FucU family. RbsD subfamily. As to quaternary structure, homodecamer.

It is found in the cytoplasm. It carries out the reaction beta-D-ribopyranose = beta-D-ribofuranose. Its pathway is carbohydrate metabolism; D-ribose degradation; D-ribose 5-phosphate from beta-D-ribopyranose: step 1/2. Its function is as follows. Catalyzes the interconversion of beta-pyran and beta-furan forms of D-ribose. The chain is D-ribose pyranase from Latilactobacillus sakei subsp. sakei (strain 23K) (Lactobacillus sakei subsp. sakei).